Here is a 264-residue protein sequence, read N- to C-terminus: Small ribosomal subunit protein eS1 (264 aa).

The span at 236 to 255 shows a compositional bias: basic and acidic residues; sequence GEGGSGKRGEAGDKSERPEG. The tract at residues 236-264 is disordered; sequence GEGGSGKRGEAGDKSERPEGYEPPVQESV.

This sequence belongs to the eukaryotic ribosomal protein eS1 family. Component of the small ribosomal subunit. Mature ribosomes consist of a small (40S) and a large (60S) subunit. The 40S subunit contains about 33 different proteins and 1 molecule of RNA (18S). The 60S subunit contains about 49 different proteins and 3 molecules of RNA (28S, 5.8S and 5S).

The protein localises to the cytoplasm. This chain is Small ribosomal subunit protein eS1, found in Spodoptera frugiperda (Fall armyworm).